Reading from the N-terminus, the 451-residue chain is tRNA-2-methylthio-N(6)-dimethylallyladenosine synthase (451 aa).

One can recognise an MTTase N-terminal domain in the interval 18-134 (ARVYLETYGC…LPNLLDLAES (117 aa)). [4Fe-4S] cluster-binding residues include C27, C63, C97, C170, C174, and C177. The Radical SAM core domain maps to 156 to 386 (RKNGHSAFLA…IALQQKISAE (231 aa)). Positions 389–451 (RNDIGNTHEV…TSATLIGNAL (63 aa)) constitute a TRAM domain.

This sequence belongs to the methylthiotransferase family. MiaB subfamily. In terms of assembly, monomer. [4Fe-4S] cluster is required as a cofactor.

Its subcellular location is the cytoplasm. The catalysed reaction is N(6)-dimethylallyladenosine(37) in tRNA + (sulfur carrier)-SH + AH2 + 2 S-adenosyl-L-methionine = 2-methylsulfanyl-N(6)-dimethylallyladenosine(37) in tRNA + (sulfur carrier)-H + 5'-deoxyadenosine + L-methionine + A + S-adenosyl-L-homocysteine + 2 H(+). Functionally, catalyzes the methylthiolation of N6-(dimethylallyl)adenosine (i(6)A), leading to the formation of 2-methylthio-N6-(dimethylallyl)adenosine (ms(2)i(6)A) at position 37 in tRNAs that read codons beginning with uridine. The polypeptide is tRNA-2-methylthio-N(6)-dimethylallyladenosine synthase (Chloroherpeton thalassium (strain ATCC 35110 / GB-78)).